The sequence spans 684 residues: Threonine--tRNA ligase (684 aa).

Positions 1–66 (MSTAASPAPA…DADVEVVPVP (66 aa)) constitute a TGS domain. The catalytic stretch occupies residues 261 to 567 (DHRKLGVELD…LTEHYAGAFP (307 aa)). Positions 366, 417, and 544 each coordinate Zn(2+).

It belongs to the class-II aminoacyl-tRNA synthetase family. In terms of assembly, homodimer. Zn(2+) serves as cofactor.

The protein localises to the cytoplasm. It carries out the reaction tRNA(Thr) + L-threonine + ATP = L-threonyl-tRNA(Thr) + AMP + diphosphate + H(+). Catalyzes the attachment of threonine to tRNA(Thr) in a two-step reaction: L-threonine is first activated by ATP to form Thr-AMP and then transferred to the acceptor end of tRNA(Thr). Also edits incorrectly charged L-seryl-tRNA(Thr). This chain is Threonine--tRNA ligase, found in Mycobacterium sp. (strain KMS).